Reading from the N-terminus, the 93-residue chain is Consomatin G2 (93 aa).

The signal sequence occupies residues 1–18; it reads MQTAYWVMLMMMVCITAP. The propeptide occupies 19–69; the sequence is LPEGGKPNSGIRGLVPNDLTPQHTLRSLISRRQTDVLLDATLLTTPAPEQR. Cys-72 and Cys-77 are joined by a disulfide. Trp-74 carries the D-tryptophan modification. The propeptide occupies 79–93; that stretch reads WRPYPWRRRDLNGKR.

The protein belongs to the conotoxin C superfamily. Consomatin family. In terms of tissue distribution, expressed by the venom duct.

It localises to the secreted. Functionally, moderately activates human somatostatin receptors (SSTR) with a preferential activation of SSTR1 and SSTR4. In vivo, does not cause behavioral changes in mice within a few minutes of intracranial injection, but causes a progressive loss of movement thereafter. Four to five hours after injection, mice recover, even with the highest dose tested. Shows antinociception and antihyperalgesia activities in two mouse models of acute pain, most probably by acting outside the central nervous system. This is Consomatin G2 from Conus geographus (Geography cone).